The chain runs to 262 residues: Thiazole synthase (262 aa).

K98 functions as the Schiff-base intermediate with DXP in the catalytic mechanism. Residues G159, 186 to 187 (AG), and 208 to 209 (NT) contribute to the 1-deoxy-D-xylulose 5-phosphate site.

Belongs to the ThiG family. In terms of assembly, homotetramer. Forms heterodimers with either ThiH or ThiS.

It is found in the cytoplasm. The enzyme catalyses [ThiS sulfur-carrier protein]-C-terminal-Gly-aminoethanethioate + 2-iminoacetate + 1-deoxy-D-xylulose 5-phosphate = [ThiS sulfur-carrier protein]-C-terminal Gly-Gly + 2-[(2R,5Z)-2-carboxy-4-methylthiazol-5(2H)-ylidene]ethyl phosphate + 2 H2O + H(+). The protein operates within cofactor biosynthesis; thiamine diphosphate biosynthesis. Functionally, catalyzes the rearrangement of 1-deoxy-D-xylulose 5-phosphate (DXP) to produce the thiazole phosphate moiety of thiamine. Sulfur is provided by the thiocarboxylate moiety of the carrier protein ThiS. In vitro, sulfur can be provided by H(2)S. The chain is Thiazole synthase from Hahella chejuensis (strain KCTC 2396).